We begin with the raw amino-acid sequence, 42 residues long: Cytochrome b559 subunit beta (42 aa).

Residues 17 to 33 (WLAIHAIGIPAVFFIGS) form a helical membrane-spanning segment. Heme is bound at residue H21.

This sequence belongs to the PsbE/PsbF family. As to quaternary structure, heterodimer of an alpha subunit and a beta subunit. PSII is composed of 1 copy each of membrane proteins PsbA, PsbB, PsbC, PsbD, PsbE, PsbF, PsbH, PsbI, PsbJ, PsbK, PsbL, PsbM, PsbT, PsbX, PsbY, PsbZ, Psb30/Ycf12, at least 3 peripheral proteins of the oxygen-evolving complex and a large number of cofactors. It forms dimeric complexes. Heme b serves as cofactor.

It localises to the plastid. Its subcellular location is the cyanelle thylakoid membrane. This b-type cytochrome is tightly associated with the reaction center of photosystem II (PSII). PSII is a light-driven water:plastoquinone oxidoreductase that uses light energy to abstract electrons from H(2)O, generating O(2) and a proton gradient subsequently used for ATP formation. It consists of a core antenna complex that captures photons, and an electron transfer chain that converts photonic excitation into a charge separation. This is Cytochrome b559 subunit beta from Cyanophora paradoxa.